Here is a 122-residue protein sequence, read N- to C-terminus: Large ribosomal subunit protein bL12 (122 aa).

This sequence belongs to the bacterial ribosomal protein bL12 family. Homodimer. Part of the ribosomal stalk of the 50S ribosomal subunit. Forms a multimeric L10(L12)X complex, where L10 forms an elongated spine to which 2 to 4 L12 dimers bind in a sequential fashion. Binds GTP-bound translation factors.

Functionally, forms part of the ribosomal stalk which helps the ribosome interact with GTP-bound translation factors. Is thus essential for accurate translation. This chain is Large ribosomal subunit protein bL12, found in Clostridium botulinum (strain 657 / Type Ba4).